Consider the following 425-residue polypeptide: Trigger factor (425 aa).

The PPIase FKBP-type domain occupies 163 to 248 (GDTAVIDFEG…IHEIKTKELP (86 aa)).

Belongs to the FKBP-type PPIase family. Tig subfamily.

The protein resides in the cytoplasm. It catalyses the reaction [protein]-peptidylproline (omega=180) = [protein]-peptidylproline (omega=0). Its function is as follows. Involved in protein export. Acts as a chaperone by maintaining the newly synthesized protein in an open conformation. Functions as a peptidyl-prolyl cis-trans isomerase. The chain is Trigger factor from Bacillus mycoides (strain KBAB4) (Bacillus weihenstephanensis).